The chain runs to 359 residues: Phospho-N-acetylmuramoyl-pentapeptide-transferase (359 aa).

A run of 10 helical transmembrane segments spans residues 27-47, 73-93, 94-114, 134-154, 166-186, 197-217, 233-253, 261-281, 286-306, and 336-356; these read IYAL…MMRW, TMGG…WADL, TNIY…VGFV, LLGQ…QPAY, FTPD…IGAS, GLAI…IYIA, GVGE…GFLW, LFMG…IAVL, LLLI…IMQV, and KIVI…LSTL.

Belongs to the glycosyltransferase 4 family. MraY subfamily. Mg(2+) is required as a cofactor.

It is found in the cell inner membrane. The catalysed reaction is UDP-N-acetyl-alpha-D-muramoyl-L-alanyl-gamma-D-glutamyl-meso-2,6-diaminopimeloyl-D-alanyl-D-alanine + di-trans,octa-cis-undecaprenyl phosphate = di-trans,octa-cis-undecaprenyl diphospho-N-acetyl-alpha-D-muramoyl-L-alanyl-D-glutamyl-meso-2,6-diaminopimeloyl-D-alanyl-D-alanine + UMP. It functions in the pathway cell wall biogenesis; peptidoglycan biosynthesis. Catalyzes the initial step of the lipid cycle reactions in the biosynthesis of the cell wall peptidoglycan: transfers peptidoglycan precursor phospho-MurNAc-pentapeptide from UDP-MurNAc-pentapeptide onto the lipid carrier undecaprenyl phosphate, yielding undecaprenyl-pyrophosphoryl-MurNAc-pentapeptide, known as lipid I. This Maridesulfovibrio salexigens (strain ATCC 14822 / DSM 2638 / NCIMB 8403 / VKM B-1763) (Desulfovibrio salexigens) protein is Phospho-N-acetylmuramoyl-pentapeptide-transferase.